The primary structure comprises 503 residues: Na(+)-translocating NADH-quinone reductase subunit B (503 aa).

The next 5 membrane-spanning stretches (helical) occupy residues 55–75 (MMLVVIALMPTVFVAIWNSGL), 85–105 (PQIMEAFLHISGFTSYFSFVS), 120–142 (IFLPLLFISYAVGGTCEVLFAII), 161–181 (ILPPTIPYWMAALGIAFGVVI), and 186–206 (FGGTGMNILNPALTGRAFLFF). Thr-248 carries the post-translational modification FMN phosphoryl threonine. 5 consecutive transmembrane segments (helical) span residues 361–381 (TSTVACLLGAGLLLLTGIASW), 387–407 (FGLSSLFFAWLFKIISILAAG), 417–437 (FFIPVYRHLFIGGLAFGLVFM), 452–472 (WFYGAFIGFLTILIRLINPAY), and 475–495 (GVMLAILLGNVFAPSFDRIAL).

This sequence belongs to the NqrB/RnfD family. As to quaternary structure, composed of six subunits; NqrA, NqrB, NqrC, NqrD, NqrE and NqrF. The cofactor is FMN.

Its subcellular location is the cell inner membrane. It catalyses the reaction a ubiquinone + n Na(+)(in) + NADH + H(+) = a ubiquinol + n Na(+)(out) + NAD(+). In terms of biological role, NQR complex catalyzes the reduction of ubiquinone-1 to ubiquinol by two successive reactions, coupled with the transport of Na(+) ions from the cytoplasm to the periplasm. NqrA to NqrE are probably involved in the second step, the conversion of ubisemiquinone to ubiquinol. The chain is Na(+)-translocating NADH-quinone reductase subunit B from Chlamydia muridarum (strain MoPn / Nigg).